Consider the following 110-residue polypeptide: uncharacterized protein (110 aa).

The helical transmembrane segment at 29–49 (GLAFIFFFLVAFYFFPAFWDL) threads the bilayer.

It is found in the membrane. This is an uncharacterized protein from Saccharomyces cerevisiae (strain ATCC 204508 / S288c) (Baker's yeast).